The chain runs to 375 residues: MTCSITELAKKLISIPSVSPKDLGCQDIIIKRLCAIGFDIKRVNVNDTKNFWAFRGTGKTLTFAGHTDVVPIGQDKDWQTDPFQPVIRSGYLFGRGSADMKGALAAMITAAERFVNKFPNHKGRLSFLITSDEESSAVDGTIKIVEYLMSKRDMIDYCIVGEPSSTNIVGDVIKNGRRGSITANITIYGIQGHIAYPDLADNPIHKGLPVILKILSIKLDSGNDFFLPSSINIANIHAGNGFNNVIPGSLFVQFNIRFSSEVSEKHIQSQIVNILNSNDINYSIEWLFSGKPFITKKGLLIDTVIQSIFYFNKKKPILSTSGGTSDGRFIALMGSEVVELGLVNNTIHKVNECVKISDLKLLSCMYEDIMKNLLS.

His-66 provides a ligand contact to Zn(2+). The active site involves Asp-68. Asp-99 serves as a coordination point for Zn(2+). Glu-133 functions as the Proton acceptor in the catalytic mechanism. Glu-134, Glu-162, and His-348 together coordinate Zn(2+).

This sequence belongs to the peptidase M20A family. DapE subfamily. As to quaternary structure, homodimer. It depends on Zn(2+) as a cofactor. Co(2+) is required as a cofactor.

It carries out the reaction N-succinyl-(2S,6S)-2,6-diaminopimelate + H2O = (2S,6S)-2,6-diaminopimelate + succinate. The protein operates within amino-acid biosynthesis; L-lysine biosynthesis via DAP pathway; LL-2,6-diaminopimelate from (S)-tetrahydrodipicolinate (succinylase route): step 3/3. Its function is as follows. Catalyzes the hydrolysis of N-succinyl-L,L-diaminopimelic acid (SDAP), forming succinate and LL-2,6-diaminopimelate (DAP), an intermediate involved in the bacterial biosynthesis of lysine and meso-diaminopimelic acid, an essential component of bacterial cell walls. This is Succinyl-diaminopimelate desuccinylase from Buchnera aphidicola subsp. Acyrthosiphon pisum (strain APS) (Acyrthosiphon pisum symbiotic bacterium).